The following is a 597-amino-acid chain: Myrcene synthase, chloroplastic (597 aa).

The transit peptide at 1 to 56 directs the protein to the chloroplast; the sequence is MALKLLTSLPMYNFSRVPVSSKDPILLVTSRTRNGYLARPVQCMVANKVSTSPDIL. (2E)-geranyl diphosphate contacts are provided by arginine 310, aspartate 347, aspartate 351, arginine 488, and aspartate 491. Residues aspartate 347 and aspartate 351 each contribute to the Mg(2+) site. The DDXXD motif signature appears at 347-351; that stretch reads DDVYD. Residues aspartate 491, threonine 495, and glutamate 499 each coordinate Mg(2+).

The protein belongs to the terpene synthase family. Tpsb subfamily. The cofactor is Mg(2+). Mn(2+) serves as cofactor.

It is found in the plastid. The protein localises to the chloroplast. It carries out the reaction (2E)-geranyl diphosphate = beta-myrcene + diphosphate. Functionally, involved in monoterpene (C10) biosynthesis. The major product is myrcene followed by minor amounts (1.2%) of the cyclic monoterpene limonene. The protein is Myrcene synthase, chloroplastic of Quercus ilex (Holly oak).